Here is a 279-residue protein sequence, read N- to C-terminus: Thymidylate synthase (279 aa).

Arginine 37 is a dUMP binding site. Histidine 67 lines the (6R)-5,10-methylene-5,6,7,8-tetrahydrofolate pocket. 142–143 serves as a coordination point for dUMP; the sequence is RR. The active-site Nucleophile is cysteine 162. DUMP is bound by residues 182–185, asparagine 193, and 223–225; these read RSAD and HLY. Aspartate 185 contributes to the (6R)-5,10-methylene-5,6,7,8-tetrahydrofolate binding site. Serine 278 is a binding site for (6R)-5,10-methylene-5,6,7,8-tetrahydrofolate.

This sequence belongs to the thymidylate synthase family. Bacterial-type ThyA subfamily. As to quaternary structure, homodimer.

It is found in the cytoplasm. It catalyses the reaction dUMP + (6R)-5,10-methylene-5,6,7,8-tetrahydrofolate = 7,8-dihydrofolate + dTMP. Its pathway is pyrimidine metabolism; dTTP biosynthesis. Catalyzes the reductive methylation of 2'-deoxyuridine-5'-monophosphate (dUMP) to 2'-deoxythymidine-5'-monophosphate (dTMP) while utilizing 5,10-methylenetetrahydrofolate (mTHF) as the methyl donor and reductant in the reaction, yielding dihydrofolate (DHF) as a by-product. This enzymatic reaction provides an intracellular de novo source of dTMP, an essential precursor for DNA biosynthesis. The protein is Thymidylate synthase of Caulobacter vibrioides (strain ATCC 19089 / CIP 103742 / CB 15) (Caulobacter crescentus).